The primary structure comprises 55 residues: MAKKTDTRIVINMACTDCGERNYTTEKNKRNDPRRIELNKYCPRCREAKVHRETK.

It belongs to the bacterial ribosomal protein bL33 family.

This Dehalococcoides mccartyi (strain ATCC BAA-2266 / KCTC 15142 / 195) (Dehalococcoides ethenogenes (strain 195)) protein is Large ribosomal subunit protein bL33.